A 403-amino-acid polypeptide reads, in one-letter code: Alkaline protease 1 (403 aa).

Positions 1–21 are cleaved as a signal peptide; sequence MQSIKRTLLLLGAILPAVLGA. Positions 22-125 are excised as a propeptide; it reads PVQETRRAAE…QIYYLDGLTT (104 aa). Residues 36-120 enclose the Inhibitor I9 domain; the sequence is KYIVTFKPGI…YVEEDQIYYL (85 aa). The Peptidase S8 domain maps to 130–403; that stretch reads PWGLGSISHK…PNLLAYNGNA (274 aa). Active-site charge relay system residues include D162 and H193. N253 carries N-linked (GlcNAc...) asparagine glycosylation. S349 serves as the catalytic Charge relay system.

It belongs to the peptidase S8 family.

Its subcellular location is the secreted. It catalyses the reaction Hydrolysis of proteins with broad specificity, and of Bz-Arg-OEt &gt; Ac-Tyr-OEt. Does not hydrolyze peptide amides.. Functionally, secreted alkaline protease that allows assimilation of proteinaceous substrates. This chain is Alkaline protease 1 (alp1), found in Aspergillus flavus (strain ATCC 200026 / FGSC A1120 / IAM 13836 / NRRL 3357 / JCM 12722 / SRRC 167).